Here is a 314-residue protein sequence, read N- to C-terminus: Taste receptor type 2 member 42 (314 aa).

The Extracellular portion of the chain corresponds to 1–7 (MPTELDK). A helical transmembrane segment spans residues 8–28 (IFLILAIVEFIIGLLGNVFIG). The Cytoplasmic portion of the chain corresponds to 29–50 (LVNCSEGIKNQKVFSADFILTC). The chain crosses the membrane as a helical span at residues 51 to 71 (LAISTIGQLLVILFDSFLVGL). The Extracellular segment spans residues 72–101 (ASHLYTTYRLGKLVILLWHMTNHLTTWLAT). The helical transmembrane segment at 102 to 122 (CLSIFYFFKIAHFPHSLFLWL) threads the bilayer. Topologically, residues 123 to 127 (RWRMN) are cytoplasmic. The helical transmembrane segment at 128 to 148 (GMIVMLRTLSLFLLIFDSLVL) threads the bilayer. Topologically, residues 149-187 (KLFIDISLNIIDKSNLTLYFDESKTLYDKLSILKTLLSL) are extracellular. The N-linked (GlcNAc...) asparagine glycan is linked to N163. The helical transmembrane segment at 188 to 208 (TSFIPFSLSLTSLLFLFLSLV) threads the bilayer. Residues 209–238 (RHTRNLKLSSLGSRDSSTEAHRRAMKMVMS) lie on the Cytoplasmic side of the membrane. A helical transmembrane segment spans residues 239 to 259 (FLFLFIVHFFSLQVANWIFFM). At 260–265 (SWNNKY) the chain is on the extracellular side. A helical membrane pass occupies residues 266 to 286 (IKFVMLALNAFPSCHSFILIL). The Cytoplasmic portion of the chain corresponds to 287–314 (GNSKLRQTAVRLLSHLRNYTKTSNPLPL).

It belongs to the G-protein coupled receptor T2R family.

It localises to the membrane. Its function is as follows. Receptor that may play a role in the perception of bitterness and is gustducin-linked. May play a role in sensing the chemical composition of the gastrointestinal content. The activity of this receptor may stimulate alpha gustducin, mediate PLC-beta-2 activation and lead to the gating of TRPM5. This is Taste receptor type 2 member 42 (TAS2R42) from Pongo pygmaeus (Bornean orangutan).